The sequence spans 418 residues: Cell division protein FtsA (418 aa).

This sequence belongs to the FtsA/MreB family. Self-interacts. Interacts with FtsZ.

Its subcellular location is the cell inner membrane. In terms of biological role, cell division protein that is involved in the assembly of the Z ring. May serve as a membrane anchor for the Z ring. The protein is Cell division protein FtsA of Buchnera aphidicola subsp. Schizaphis graminum (strain Sg).